The sequence spans 1446 residues: Sister chromatid cohesion protein PDS5 homolog B (1446 aa).

The HEAT repeat unit spans residues 383–419 (LLVNDHLLNFVRERTLDKRWRVRKEAMMGLAQIYKKY). Lys-1136 carries the post-translational modification N6-acetyllysine. Positions 1137–1155 (PLSSAGKQSQTKSSRMETV) are enriched in polar residues. The interval 1137 to 1446 (PLSSAGKQSQ…RRRSSKRERR (310 aa)) is disordered. Phosphoserine occurs at positions 1140, 1162, 1166, 1176, 1182, and 1191. Residues 1156-1167 (SNASSSSNPSSP) show a composition bias toward low complexity. The span at 1172–1184 (GRLDSSEMDHSEN) shows a compositional bias: basic and acidic residues. Basic and acidic residues-rich tracts occupy residues 1196–1212 (KKSDKREDPDLSELEKP) and 1223–1241 (PEEKLGMDDLTKLVQEQKP). Residues 1243-1252 (GSQRGRKRGR) are compositionally biased toward basic residues. Positions 1247–1259 (GRKRGRTASDSDE) form a DNA-binding region, a.T hook 1. The residue at position 1253 (Thr-1253) is a Phosphothreonine. Phosphoserine is present on residues Ser-1255 and Ser-1257. Residues 1263-1272 (PEEKRHKEEL) show a composition bias toward basic and acidic residues. Ser-1281 carries the post-translational modification Phosphoserine. The segment at residues 1285-1297 (KGKRGRPPKPLGG) is a DNA-binding region (a.T hook 2). Basic residues-rich tracts occupy residues 1308–1317 (TSKKGNKKKL) and 1339–1351 (SKSKQHRTSKRAQ). Positions 1353 to 1370 (RAESPETSAVESTQSTPQ) are enriched in polar residues. A phosphoserine mark is found at Ser-1356 and Ser-1364. The residue at position 1365 (Thr-1365) is a Phosphothreonine. Ser-1367 is subject to Phosphoserine. Thr-1368 bears the Phosphothreonine mark. Residues 1370–1382 (QKGRGRPSKAPSP) constitute a DNA-binding region (a.T hook 3). Phosphoserine is present on residues Ser-1381, Ser-1415, and Ser-1418. Residues 1421 to 1431 (TTQEGAEEEDI) show a composition bias toward acidic residues. A compositionally biased stretch (basic residues) spans 1436 to 1446 (VRRRSSKRERR).

Belongs to the PDS5 family. Interacts with the cohesin complex. Interacts with RAD21; the interaction is direct. Interacts with WAPL (via FGF motifs) or CDCA5 (via the FGF motif); the interaction is direct, cohesin-dependent and competitive. As to expression, expressed in prostate.

It is found in the nucleus. Functionally, regulator of sister chromatid cohesion in mitosis which may stabilize cohesin complex association with chromatin. May couple sister chromatid cohesion during mitosis to DNA replication. Cohesion ensures that chromosome partitioning is accurate in both meiotic and mitotic cells and plays an important role in DNA repair. Plays a role in androgen-induced proliferative arrest in prostate cells. The protein is Sister chromatid cohesion protein PDS5 homolog B (Pds5b) of Mus musculus (Mouse).